The primary structure comprises 576 residues: Proline--tRNA ligase (576 aa).

The protein belongs to the class-II aminoacyl-tRNA synthetase family. ProS type 1 subfamily. As to quaternary structure, homodimer.

It is found in the cytoplasm. The catalysed reaction is tRNA(Pro) + L-proline + ATP = L-prolyl-tRNA(Pro) + AMP + diphosphate. Catalyzes the attachment of proline to tRNA(Pro) in a two-step reaction: proline is first activated by ATP to form Pro-AMP and then transferred to the acceptor end of tRNA(Pro). As ProRS can inadvertently accommodate and process non-cognate amino acids such as alanine and cysteine, to avoid such errors it has two additional distinct editing activities against alanine. One activity is designated as 'pretransfer' editing and involves the tRNA(Pro)-independent hydrolysis of activated Ala-AMP. The other activity is designated 'posttransfer' editing and involves deacylation of mischarged Ala-tRNA(Pro). The misacylated Cys-tRNA(Pro) is not edited by ProRS. The chain is Proline--tRNA ligase from Pelobacter propionicus (strain DSM 2379 / NBRC 103807 / OttBd1).